The primary structure comprises 549 residues: Glucose-6-phosphate isomerase (549 aa).

Glu-355 acts as the Proton donor in catalysis. Residues His-386 and Lys-514 contribute to the active site.

This sequence belongs to the GPI family.

The protein localises to the cytoplasm. It catalyses the reaction alpha-D-glucose 6-phosphate = beta-D-fructose 6-phosphate. It participates in carbohydrate biosynthesis; gluconeogenesis. The protein operates within carbohydrate degradation; glycolysis; D-glyceraldehyde 3-phosphate and glycerone phosphate from D-glucose: step 2/4. Catalyzes the reversible isomerization of glucose-6-phosphate to fructose-6-phosphate. The chain is Glucose-6-phosphate isomerase from Buchnera aphidicola subsp. Acyrthosiphon pisum (strain 5A).